A 280-amino-acid polypeptide reads, in one-letter code: Diaminopimelate epimerase (280 aa).

Substrate-binding residues include asparagine 15 and asparagine 66. Cysteine 75 acts as the Proton donor in catalysis. Substrate-binding positions include 76–77, asparagine 163, asparagine 196, and 214–215; these read GN and ER. Cysteine 223 (proton acceptor) is an active-site residue. 224–225 is a binding site for substrate; that stretch reads GT.

It belongs to the diaminopimelate epimerase family. As to quaternary structure, homodimer.

The protein resides in the cytoplasm. The catalysed reaction is (2S,6S)-2,6-diaminopimelate = meso-2,6-diaminopimelate. It functions in the pathway amino-acid biosynthesis; L-lysine biosynthesis via DAP pathway; DL-2,6-diaminopimelate from LL-2,6-diaminopimelate: step 1/1. Catalyzes the stereoinversion of LL-2,6-diaminopimelate (L,L-DAP) to meso-diaminopimelate (meso-DAP), a precursor of L-lysine and an essential component of the bacterial peptidoglycan. The polypeptide is Diaminopimelate epimerase (Phocaeicola vulgatus (strain ATCC 8482 / DSM 1447 / JCM 5826 / CCUG 4940 / NBRC 14291 / NCTC 11154) (Bacteroides vulgatus)).